Here is a 479-residue protein sequence, read N- to C-terminus: Long-chain alcohol oxidase (479 aa).

The region spanning 14-183 is the FAD-binding PCMH-type domain; it reads QILRPSAAYT…LAVRIRCREQ (170 aa). His-49 carries the pros-8alpha-FAD histidine modification. FAD contacts are provided by residues Thr-113, Gly-116, 120–123, and Ile-173; that span reads TGTH. A helical membrane pass occupies residues 241 to 258; the sequence is LYWLGTMDYGLILQILFL. Residues Arg-369 and His-425 each coordinate FAD.

This sequence belongs to the oxygen-dependent FAD-linked oxidoreductase family. FAD serves as cofactor.

Its subcellular location is the cell membrane. It carries out the reaction a long-chain primary fatty alcohol + O2 = a long-chain fatty aldehyde + H2O2. The catalysed reaction is dodecan-1-ol + O2 = dodecanal + H2O2. It catalyses the reaction tetradecan-1-ol + O2 = tetradecanal + H2O2. The enzyme catalyses octan-1-ol + O2 = octanal + H2O2. It carries out the reaction decan-1-ol + O2 = decanal + H2O2. Its pathway is lipid metabolism; fatty acid metabolism. Functionally, in vitro catalyzes the oxidation of a range of fatty alcohols having a carbon chain length of six and above, with a reduction of O2 to H2O2. Shows the highest activity with 1-dodecanol. Is likely involved in lipid metabolism. In Uncultured marine euryarchaeote, this protein is Long-chain alcohol oxidase.